Reading from the N-terminus, the 255-residue chain is 5-oxoprolinase subunit A (255 aa).

It belongs to the LamB/PxpA family. Forms a complex composed of PxpA, PxpB and PxpC.

It carries out the reaction 5-oxo-L-proline + ATP + 2 H2O = L-glutamate + ADP + phosphate + H(+). In terms of biological role, catalyzes the cleavage of 5-oxoproline to form L-glutamate coupled to the hydrolysis of ATP to ADP and inorganic phosphate. The protein is 5-oxoprolinase subunit A of Thermococcus sibiricus (strain DSM 12597 / MM 739).